The sequence spans 509 residues: Glycerol kinase (509 aa).

Thr-17 lines the ADP pocket. Residues Thr-17, Thr-18, and Ser-19 each contribute to the ATP site. Thr-17 contacts sn-glycerol 3-phosphate. Arg-21 lines the ADP pocket. Positions 87, 88, 139, and 256 each coordinate sn-glycerol 3-phosphate. Glycerol-binding residues include Arg-87, Glu-88, Tyr-139, Asp-256, and Gln-257. Residues Thr-278 and Gly-322 each contribute to the ADP site. ATP contacts are provided by Thr-278, Gly-322, Gln-326, and Ala-423. The ADP site is built by Ala-423 and Asn-427.

This sequence belongs to the FGGY kinase family.

The enzyme catalyses glycerol + ATP = sn-glycerol 3-phosphate + ADP + H(+). The protein operates within polyol metabolism; glycerol degradation via glycerol kinase pathway; sn-glycerol 3-phosphate from glycerol: step 1/1. Inhibited by fructose 1,6-bisphosphate (FBP). Its function is as follows. Key enzyme in the regulation of glycerol uptake and metabolism. Catalyzes the phosphorylation of glycerol to yield sn-glycerol 3-phosphate. The protein is Glycerol kinase of Corynebacterium glutamicum (strain R).